We begin with the raw amino-acid sequence, 323 residues long: Sphingolipid delta(4)-desaturase DES1 (323 aa).

Glycine 2 carries the N-myristoyl glycine lipid modification. Helical transmembrane passes span 41–61 (SNLI…FYLV) and 68–88 (WVLF…TLAI). The short motif at 89-93 (HEVSH) is the Histidine box-1 element. A helical transmembrane segment spans residues 102–122 (AMWNRWFGIFANLPIGVPYSV). A Histidine box-2 motif is present at residues 128–132 (HMDHH). 3 helical membrane passes run 152 to 172 (FFCT…FYAF), 184 to 204 (YLEI…YYVL), and 209 to 229 (LVYM…SGHF). Residues 259-263 (HNEHH) carry the Histidine box-3 motif. Serine 307 is subject to Phosphoserine.

This sequence belongs to the fatty acid desaturase type 1 family. DEGS subfamily. Interacts with RLBP1; the interaction increases synthesis of chromophore-precursors by DEGS1. Post-translationally, myristoylation can target the enzyme to the mitochondria leading to an increase in ceramide levels.

It localises to the mitochondrion membrane. The protein localises to the endoplasmic reticulum membrane. It carries out the reaction an N-acylsphinganine + 2 Fe(II)-[cytochrome b5] + O2 + 2 H(+) = an N-acylsphing-4-enine + 2 Fe(III)-[cytochrome b5] + 2 H2O. It catalyses the reaction all-trans-retinol = 11-cis-retinol. The enzyme catalyses all-trans-retinol = 9-cis-retinol. The catalysed reaction is all-trans-retinol = 13-cis-retinol. It carries out the reaction 11-cis-retinol = 13-cis-retinol. It catalyses the reaction 11-cis-retinol = 9-cis-retinol. In terms of biological role, has sphingolipid-delta-4-desaturase activity. Converts D-erythro-sphinganine to D-erythro-sphingosine (E-sphing-4-enine). Catalyzes the equilibrium isomerization of retinols. The polypeptide is Sphingolipid delta(4)-desaturase DES1 (DEGS1) (Bos taurus (Bovine)).